The chain runs to 289 residues: S-methyl-5'-thioadenosine phosphorylase (289 aa).

Phosphate contacts are provided by residues Ser-24, 66-67 (RH), and 99-100 (TA). Met-202 is a substrate binding site. Thr-203 is a phosphate binding site. 226 to 228 (DYD) is a substrate binding site.

It belongs to the PNP/MTAP phosphorylase family. MTAP subfamily. In terms of assembly, homotrimer.

The protein localises to the cytoplasm. The protein resides in the nucleus. The enzyme catalyses S-methyl-5'-thioadenosine + phosphate = 5-(methylsulfanyl)-alpha-D-ribose 1-phosphate + adenine. It functions in the pathway amino-acid biosynthesis; L-methionine biosynthesis via salvage pathway; S-methyl-5-thio-alpha-D-ribose 1-phosphate from S-methyl-5'-thioadenosine (phosphorylase route): step 1/1. Functionally, catalyzes the reversible phosphorylation of S-methyl-5'-thioadenosine (MTA) to adenine and 5-methylthioribose-1-phosphate. Involved in the breakdown of MTA, a major by-product of polyamine biosynthesis. Responsible for the first step in the methionine salvage pathway after MTA has been generated from S-adenosylmethionine. Has broad substrate specificity with 6-aminopurine nucleosides as preferred substrates. The chain is S-methyl-5'-thioadenosine phosphorylase from Drosophila pseudoobscura pseudoobscura (Fruit fly).